Consider the following 101-residue polypeptide: Small ribosomal subunit protein uS14 (101 aa).

Belongs to the universal ribosomal protein uS14 family. In terms of assembly, part of the 30S ribosomal subunit. Contacts proteins S3 and S10.

Its function is as follows. Binds 16S rRNA, required for the assembly of 30S particles and may also be responsible for determining the conformation of the 16S rRNA at the A site. The protein is Small ribosomal subunit protein uS14 of Buchnera aphidicola subsp. Schizaphis graminum (strain Sg).